The primary structure comprises 183 residues: ATP synthase subunit b, chloroplastic (183 aa).

Residues 27-49 (LATNLINLTVVVGVLIYFGKGVL) traverse the membrane as a helical segment.

Belongs to the ATPase B chain family. F-type ATPases have 2 components, F(1) - the catalytic core - and F(0) - the membrane proton channel. F(1) has five subunits: alpha(3), beta(3), gamma(1), delta(1), epsilon(1). F(0) has four main subunits: a(1), b(1), b'(1) and c(10-14). The alpha and beta chains form an alternating ring which encloses part of the gamma chain. F(1) is attached to F(0) by a central stalk formed by the gamma and epsilon chains, while a peripheral stalk is formed by the delta, b and b' chains.

It is found in the plastid. Its subcellular location is the chloroplast thylakoid membrane. In terms of biological role, f(1)F(0) ATP synthase produces ATP from ADP in the presence of a proton or sodium gradient. F-type ATPases consist of two structural domains, F(1) containing the extramembraneous catalytic core and F(0) containing the membrane proton channel, linked together by a central stalk and a peripheral stalk. During catalysis, ATP synthesis in the catalytic domain of F(1) is coupled via a rotary mechanism of the central stalk subunits to proton translocation. Component of the F(0) channel, it forms part of the peripheral stalk, linking F(1) to F(0). This Oryza nivara (Indian wild rice) protein is ATP synthase subunit b, chloroplastic.